A 283-amino-acid chain; its full sequence is MAEITASLVKELRERTGAGMMECKKALVEANGDIELAIDNMRKSGQAKAAKKAGRVAAEGVIVARIANGFGVLVEMNCETDFVAKDAGFLGLANEVADFAAANKGTEIEALAAQFEEKRAALVAKIGENMTIRRVQYLDDARASYLHGAKIGVLVAGQGGDEELFKKVAMHVAASRPEYVNPTDVPADVVEHERNIQVDIAMQSGKPREIAEKMVEGRMRKFTGEVSLTGQPFVMDPSQSVGDFLKAAGATVSGFIRFEVGEGIEKVEEDFAAEVAKITGGNA.

The interval 80 to 83 (TDFV) is involved in Mg(2+) ion dislocation from EF-Tu.

It belongs to the EF-Ts family.

It is found in the cytoplasm. Associates with the EF-Tu.GDP complex and induces the exchange of GDP to GTP. It remains bound to the aminoacyl-tRNA.EF-Tu.GTP complex up to the GTP hydrolysis stage on the ribosome. This Actinobacillus succinogenes (strain ATCC 55618 / DSM 22257 / CCUG 43843 / 130Z) protein is Elongation factor Ts.